The chain runs to 165 residues: Iron sulfur cluster assembly protein 1, mitochondrial (165 aa).

The N-terminal 27 residues, Met1–Ala27, are a transit peptide targeting the mitochondrion. The interval Leu132 to Lys136 is SSQ1 binding region.

Belongs to the NifU family. Homodimer, but can exist as monomers or trimers. Oligomerization may be regulated by Zn(2+) availability. Component of the core Fe-S cluster (ISC) assembly machinery. Interacts with YFH1/frataxin with a 1 to 1 stoichiometry; the interaction is direct. Interacts with the mitochondrial co-chaperones JAC1 and SSQ1. Interacts with NFS1. Interacts with YAH1/ferredoxin; interacts with the reduced form. The cofactor is [2Fe-2S] cluster. It depends on Zn(2+) as a cofactor.

The protein resides in the mitochondrion matrix. It participates in cofactor biosynthesis; iron-sulfur cluster biosynthesis. In terms of biological role, scaffold protein for the de novo synthesis of iron-sulfur (Fe-S) clusters within mitochondria, which is required for maturation of both mitochondrial and cytoplasmic [2Fe-2S] and [4Fe-4S] proteins. First, a [2Fe-2S] cluster is transiently assembled on the scaffold proteins ISU1 and ISU2. In a second step, the cluster is released from ISU1/ISU2, transferred to glutaredoxin GRX5, followed by the formation of mitochondrial [2Fe-2S] proteins, the synthesis of [4Fe-4S] clusters and their target-specific insertion into the recipient apoproteins. Cluster assembly on ISU1/ISU2 depends on the function of the cysteine desulfurase complex NFS1-ISD11, which serves as the sulfur donor for cluster synthesis, the iron-binding protein frataxin (YFH1) as the putative iron donor, and the electron transfer chain comprised of ferredoxin reductase ARH1 and ferredoxin YAH1, which receive their electrons from NADH. Fe-S cluster release from ISU1/ISU2 is achieved by interaction with the Hsp70 chaperone SSQ1, assisted by the DnaJ-like co-chaperone JAC1 and the nucleotide exchange factor MGE1. ISU1 is the major isoform in yeast, while ISU2 is not detectable in cells grown to stationary phase. Also involved in production of a sulfur precursor required for thiolation of cytoplasmic tRNAs. In Saccharomyces cerevisiae (strain ATCC 204508 / S288c) (Baker's yeast), this protein is Iron sulfur cluster assembly protein 1, mitochondrial.